The sequence spans 969 residues: RNA polymerase-associated protein RapA (969 aa).

The Helicase ATP-binding domain maps to 164 to 334 (EVGRRHAPRV…FARLRLLDAD (171 aa)). 177-184 (DEVGLGKT) serves as a coordination point for ATP. Residues 280-283 (DEAH) carry the DEAH box motif. One can recognise a Helicase C-terminal domain in the interval 492–646 (RVNWLLEKVK…TCPTGRAVYD (155 aa)).

This sequence belongs to the SNF2/RAD54 helicase family. RapA subfamily. In terms of assembly, interacts with the RNAP. Has a higher affinity for the core RNAP than for the holoenzyme. Its ATPase activity is stimulated by binding to RNAP.

Its function is as follows. Transcription regulator that activates transcription by stimulating RNA polymerase (RNAP) recycling in case of stress conditions such as supercoiled DNA or high salt concentrations. Probably acts by releasing the RNAP, when it is trapped or immobilized on tightly supercoiled DNA. Does not activate transcription on linear DNA. Probably not involved in DNA repair. The sequence is that of RNA polymerase-associated protein RapA from Vibrio cholerae serotype O1 (strain ATCC 39315 / El Tor Inaba N16961).